Here is a 468-residue protein sequence, read N- to C-terminus: ATP synthase subunit beta (468 aa).

Residue 155 to 162 (GGAGVGKT) coordinates ATP.

This sequence belongs to the ATPase alpha/beta chains family. As to quaternary structure, F-type ATPases have 2 components, CF(1) - the catalytic core - and CF(0) - the membrane proton channel. CF(1) has five subunits: alpha(3), beta(3), gamma(1), delta(1), epsilon(1). CF(0) has three main subunits: a(1), b(2) and c(9-12). The alpha and beta chains form an alternating ring which encloses part of the gamma chain. CF(1) is attached to CF(0) by a central stalk formed by the gamma and epsilon chains, while a peripheral stalk is formed by the delta and b chains.

It is found in the cell inner membrane. It catalyses the reaction ATP + H2O + 4 H(+)(in) = ADP + phosphate + 5 H(+)(out). Produces ATP from ADP in the presence of a proton gradient across the membrane. The catalytic sites are hosted primarily by the beta subunits. This Thermotoga petrophila (strain ATCC BAA-488 / DSM 13995 / JCM 10881 / RKU-1) protein is ATP synthase subunit beta.